The primary structure comprises 510 residues: Fumarate hydratase, mitochondrial (510 aa).

Residues 1 to 44 (MYRALWLLARSRRLVRPPASALASAPGLSGAAVPSFWPPNAARM) constitute a mitochondrion transit peptide. N6-acetyllysine; alternate is present on residues lysine 61, lysine 66, and lysine 80. Lysine 61, lysine 66, and lysine 80 each carry N6-succinyllysine; alternate. Residues threonine 85 and threonine 90 each carry the phosphothreonine modification. An N6-acetyllysine modification is found at lysine 94. N6-acetyllysine; alternate occurs at positions 115 and 122. 2 positions are modified to N6-succinyllysine; alternate: lysine 115 and lysine 122. Residues 145-147 (SGT), 176-179 (HPND), and 186-188 (SSN) contribute to the substrate site. Lysine 213 carries the post-translational modification N6-acetyllysine. Lysine 223 bears the N6-acetyllysine; alternate mark. An N6-succinyllysine; alternate modification is found at lysine 223. Threonine 234 contributes to the substrate binding site. Histidine 235 (proton donor/acceptor) is an active-site residue. At threonine 236 the chain carries Phosphothreonine. Residue lysine 256 is modified to N6-acetyllysine. N6-acetyllysine; alternate is present on lysine 292. At lysine 292 the chain carries N6-succinyllysine; alternate. The active site involves serine 365. Residues serine 366 and 371–373 (KVN) each bind substrate. Phosphoserine is present on serine 366. N6-succinyllysine occurs at positions 467 and 473. Lysine 502 is modified (N6-acetyllysine).

This sequence belongs to the class-II fumarase/aspartase family. Fumarase subfamily. Homotetramer. Interacts with H2AZ1. Phosphorylation at Thr-236 by PRKDC in response to DNA damage promotes translocation to the nucleus and recruitment to DNA double-strand breaks (DSBs).

Its subcellular location is the mitochondrion. It is found in the cytoplasm. The protein localises to the cytosol. It localises to the nucleus. The protein resides in the chromosome. It carries out the reaction (S)-malate = fumarate + H2O. The protein operates within carbohydrate metabolism; tricarboxylic acid cycle; (S)-malate from fumarate: step 1/1. Catalyzes the reversible stereospecific interconversion of fumarate to L-malate. Experiments in other species have demonstrated that specific isoforms of this protein act in defined pathways and favor one direction over the other. Functionally, catalyzes the hydration of fumarate to L-malate in the tricarboxylic acid (TCA) cycle to facilitate a transition step in the production of energy in the form of NADH. In terms of biological role, catalyzes the dehydration of L-malate to fumarate. Fumarate metabolism in the cytosol plays a role during urea cycle and arginine metabolism; fumarate being a by-product of the urea cycle and amino-acid catabolism. Also plays a role in DNA repair by promoting non-homologous end-joining (NHEJ). In response to DNA damage and phosphorylation by PRKDC, translocates to the nucleus and accumulates at DNA double-strand breaks (DSBs): acts by catalyzing formation of fumarate, an inhibitor of KDM2B histone demethylase activity, resulting in enhanced dimethylation of histone H3 'Lys-36' (H3K36me2). This Macaca fascicularis (Crab-eating macaque) protein is Fumarate hydratase, mitochondrial.